Reading from the N-terminus, the 130-residue chain is Immunoglobulin kappa chain variable 9-120 (130 aa).

The signal sequence occupies residues 1 to 22 (MDMRAPAQIFGFLLLLFQGTRC). The framework-1 stretch occupies residues 23-45 (DIQMTQSPSSLSASLGERVSLTC). A disulfide bridge links Cys45 with Cys110. The complementarity-determining-1 stretch occupies residues 46 to 56 (RASQDIGSSLN). Positions 57–71 (WLQQEPDGTIKRLIY) are framework-2. The segment at 72-78 (ATSSLDS) is complementarity-determining-2. The segment at 79 to 110 (GVPKRFSGSRSGSDYSLTISSLESEDFVDYYC) is framework-3. Residues 111 to 119 (LQYASSPWT) are complementarity-determining-3. The framework-4 stretch occupies residues 120–129 (FGGGTKLEIK).

The polypeptide is Immunoglobulin kappa chain variable 9-120 (Mus musculus (Mouse)).